Here is a 233-residue protein sequence, read N- to C-terminus: 7-cyano-7-deazaguanine synthase (233 aa).

Position 7-17 (7-17) interacts with ATP; sequence LSGGLDSLVTS. Zn(2+) is bound by residues C195, C206, C209, and C212.

This sequence belongs to the QueC family. Zn(2+) is required as a cofactor.

It catalyses the reaction 7-carboxy-7-deazaguanine + NH4(+) + ATP = 7-cyano-7-deazaguanine + ADP + phosphate + H2O + H(+). It functions in the pathway purine metabolism; 7-cyano-7-deazaguanine biosynthesis. Its function is as follows. Catalyzes the ATP-dependent conversion of 7-carboxy-7-deazaguanine (CDG) to 7-cyano-7-deazaguanine (preQ(0)). The protein is 7-cyano-7-deazaguanine synthase of Methanococcus vannielii (strain ATCC 35089 / DSM 1224 / JCM 13029 / OCM 148 / SB).